A 432-amino-acid polypeptide reads, in one-letter code: MGKNVVVLGTQWGDEGKGKVVDLLTERAQYVVRYQGGHNAGHTLVINGEKTVLHLIPSGILRENVTSIIGNGVVLAPDALMKEMGELEARGIPVRERLLLSEACPLILPYHVALDNAREKARGAKAIGTTGRGIGPAYEDKVARRGLRVSDLFNKETFAVKLKEIVDYHNFQLVNYYKVEAVDYQATLDYVLSIADILTAMVVDVSELLDGARKRGDLIMFEGAQGTLLDIDHGTYPYVTSSNTTAGGVATGSGIGPRYVDYVLGIVKAYSTRVGAGPFPTELFDETGEFLCKQGNEFGATTGRRRRTGWLDAVAVRRSVQINSLSGFCLTKLDVLDGLKEVKICVGYRMPDGREMTTTPLAAEGWEGIEPIYESMPGWSDTTFGVKEHSKLPQAALNYIKRIEELTGVPVDIISTGPDRSETMILRDPFDA.

GTP-binding positions include 13 to 19 (GDEGKGK) and 41 to 43 (GHT). The Proton acceptor role is filled by aspartate 14. Residues aspartate 14 and glycine 41 each contribute to the Mg(2+) site. IMP-binding positions include 14–17 (DEGK), 39–42 (NAGH), threonine 130, arginine 144, glutamine 225, threonine 240, and arginine 304. Histidine 42 acts as the Proton donor in catalysis. A substrate-binding site is contributed by 300–306 (ATTGRRR). Residues arginine 306, 332-334 (KLD), and 415-417 (STG) each bind GTP.

Belongs to the adenylosuccinate synthetase family. As to quaternary structure, homodimer. Mg(2+) serves as cofactor.

It is found in the cytoplasm. It carries out the reaction IMP + L-aspartate + GTP = N(6)-(1,2-dicarboxyethyl)-AMP + GDP + phosphate + 2 H(+). The protein operates within purine metabolism; AMP biosynthesis via de novo pathway; AMP from IMP: step 1/2. Plays an important role in the de novo pathway of purine nucleotide biosynthesis. Catalyzes the first committed step in the biosynthesis of AMP from IMP. This chain is Adenylosuccinate synthetase, found in Serratia proteamaculans (strain 568).